Consider the following 116-residue polypeptide: UPF0102 protein PERMA_0362 (116 aa).

Belongs to the UPF0102 family.

The sequence is that of UPF0102 protein PERMA_0362 from Persephonella marina (strain DSM 14350 / EX-H1).